Reading from the N-terminus, the 161-residue chain is Large ribosomal subunit protein uL15 (161 aa).

Positions M1–G43 are disordered. The segment covering R21–G37 has biased composition (gly residues).

It belongs to the universal ribosomal protein uL15 family. As to quaternary structure, part of the 50S ribosomal subunit.

Functionally, binds to the 23S rRNA. The chain is Large ribosomal subunit protein uL15 from Bradyrhizobium sp. (strain ORS 278).